Reading from the N-terminus, the 494-residue chain is PIGF/3-ketodihydrosphingosine reductase fusion protein (494 aa).

G20, S22, and G24 together coordinate NADPH. A GXSXG motif is present at residues 20–24 (GGSQG). L25 is a binding site for NADP(+). NADPH-binding residues include R45 and K49. Residue V54 participates in NADP(+) binding. Residues D74 and L75 each contribute to the NADPH site. The chain crosses the membrane as a helical span at residues 148–168 (ILLVGSLLSSLPIIGYSAYSP). 3 residues coordinate NADP(+): Y166, K170, and I199. The active-site Proton acceptor is Y166. K170 serves as the catalytic Lowers pKa of active site Tyr. The next 6 membrane-spanning stretches (helical) occupy residues 264 to 284 (HDNP…WPFY), 312 to 332 (IFTL…LNCL), 370 to 390 (LAGA…LVAF), 402 to 422 (YFCA…TLAF), 444 to 464 (LRSW…PLDW), and 473 to 493 (ITIV…GEIL).

It in the N-terminal section; belongs to the short-chain dehydrogenases/reductases (SDR) family. This sequence in the C-terminal section; belongs to the PIGF family.

It is found in the endoplasmic reticulum membrane. It catalyses the reaction sphinganine + NADP(+) = 3-oxosphinganine + NADPH + H(+). It participates in glycolipid biosynthesis; glycosylphosphatidylinositol-anchor biosynthesis. It functions in the pathway lipid metabolism; sphingolipid metabolism. Its function is as follows. Acts in the GPI biosynthetic pathway between GlcNAc-PI synthesis and GPI transfer to protein. Required for the formation of complete GPI precursors CP1 and CP2. Catalyzes the reduction of 3'-oxosphinganine (3-ketodihydrosphingosine/KDS) to sphinganine (dihydrosphingosine/DHS), the second step of de novo sphingolipid biosynthesis. The chain is PIGF/3-ketodihydrosphingosine reductase fusion protein from Schizosaccharomyces pombe (strain 972 / ATCC 24843) (Fission yeast).